Consider the following 339-residue polypeptide: Phosphate acyltransferase (339 aa).

The protein belongs to the PlsX family. In terms of assembly, homodimer. Probably interacts with PlsY.

The protein localises to the cytoplasm. It carries out the reaction a fatty acyl-[ACP] + phosphate = an acyl phosphate + holo-[ACP]. Its pathway is lipid metabolism; phospholipid metabolism. In terms of biological role, catalyzes the reversible formation of acyl-phosphate (acyl-PO(4)) from acyl-[acyl-carrier-protein] (acyl-ACP). This enzyme utilizes acyl-ACP as fatty acyl donor, but not acyl-CoA. In Vesicomyosocius okutanii subsp. Calyptogena okutanii (strain HA), this protein is Phosphate acyltransferase.